The chain runs to 329 residues: 4-hydroxythreonine-4-phosphate dehydrogenase (329 aa).

The substrate site is built by His-137 and Thr-138. 3 residues coordinate a divalent metal cation: His-167, His-212, and His-267. Substrate contacts are provided by Lys-275, Asn-284, and Arg-293.

The protein belongs to the PdxA family. Homodimer. The cofactor is Zn(2+). It depends on Mg(2+) as a cofactor. Requires Co(2+) as cofactor.

It is found in the cytoplasm. The catalysed reaction is 4-(phosphooxy)-L-threonine + NAD(+) = 3-amino-2-oxopropyl phosphate + CO2 + NADH. It participates in cofactor biosynthesis; pyridoxine 5'-phosphate biosynthesis; pyridoxine 5'-phosphate from D-erythrose 4-phosphate: step 4/5. Catalyzes the NAD(P)-dependent oxidation of 4-(phosphooxy)-L-threonine (HTP) into 2-amino-3-oxo-4-(phosphooxy)butyric acid which spontaneously decarboxylates to form 3-amino-2-oxopropyl phosphate (AHAP). This chain is 4-hydroxythreonine-4-phosphate dehydrogenase, found in Stutzerimonas stutzeri (strain A1501) (Pseudomonas stutzeri).